Reading from the N-terminus, the 563-residue chain is Arginine--tRNA ligase (563 aa).

Positions 123-133 match the 'HIGH' region motif; that stretch reads PNIAKDMHVGH.

This sequence belongs to the class-I aminoacyl-tRNA synthetase family. Monomer.

The protein resides in the cytoplasm. The enzyme catalyses tRNA(Arg) + L-arginine + ATP = L-arginyl-tRNA(Arg) + AMP + diphosphate. In Chlamydia trachomatis serovar A (strain ATCC VR-571B / DSM 19440 / HAR-13), this protein is Arginine--tRNA ligase.